The chain runs to 203 residues: Small ribosomal subunit protein uS4 (203 aa).

Positions L93–L158 constitute an S4 RNA-binding domain.

Belongs to the universal ribosomal protein uS4 family. Part of the 30S ribosomal subunit. Contacts protein S5. The interaction surface between S4 and S5 is involved in control of translational fidelity.

In terms of biological role, one of the primary rRNA binding proteins, it binds directly to 16S rRNA where it nucleates assembly of the body of the 30S subunit. Functionally, with S5 and S12 plays an important role in translational accuracy. The sequence is that of Small ribosomal subunit protein uS4 from Akkermansia muciniphila (strain ATCC BAA-835 / DSM 22959 / JCM 33894 / BCRC 81048 / CCUG 64013 / CIP 107961 / Muc).